Here is a 485-residue protein sequence, read N- to C-terminus: Anthranilate synthase component I-like protein (485 aa).

Residues S69 and 271–273 contribute to the L-tryptophan site; that span reads PFA. 306-307 is a binding site for chorismate; sequence GT. Residue E333 participates in Mg(2+) binding. Residues R441, 455–457, and G457 contribute to the chorismate site; that span reads GAG. A Mg(2+)-binding site is contributed by E470.

This sequence belongs to the anthranilate synthase component I family. As to quaternary structure, tetramer of two components I and two components II. Mg(2+) is required as a cofactor.

The enzyme catalyses chorismate + L-glutamine = anthranilate + pyruvate + L-glutamate + H(+). It participates in amino-acid biosynthesis; L-tryptophan biosynthesis; L-tryptophan from chorismate: step 1/5. This chain is Anthranilate synthase component I-like protein (trpE2), found in Synechocystis sp. (strain ATCC 27184 / PCC 6803 / Kazusa).